The chain runs to 248 residues: tRNA (guanine-N(1)-)-methyltransferase (248 aa).

Residues Gly-126 and 150–155 each bind S-adenosyl-L-methionine; that span reads LGDYVL. The tract at residues 224–248 is disordered; the sequence is WRRTQQEERTRERRPDLWAAFDSED. Positions 227-239 are enriched in basic and acidic residues; sequence TQQEERTRERRPD.

The protein belongs to the RNA methyltransferase TrmD family. Homodimer.

It localises to the cytoplasm. The catalysed reaction is guanosine(37) in tRNA + S-adenosyl-L-methionine = N(1)-methylguanosine(37) in tRNA + S-adenosyl-L-homocysteine + H(+). Functionally, specifically methylates guanosine-37 in various tRNAs. This chain is tRNA (guanine-N(1)-)-methyltransferase, found in Micrococcus luteus (strain ATCC 4698 / DSM 20030 / JCM 1464 / CCM 169 / CCUG 5858 / IAM 1056 / NBRC 3333 / NCIMB 9278 / NCTC 2665 / VKM Ac-2230) (Micrococcus lysodeikticus).